The chain runs to 472 residues: MTKPALRSDIPMKPTAHKQEKPSVAFAHLGCEKNRVDTEHMLGLLTEAGYSVSSDENDAAVVVVNTCSFIQDAREESVRTLIGLAEQGKELIIAGCLAQHFQEELLESIPEAKAIVGTGDYQHIVDVLKRVEAGERVNRVSAFPTFVGDETLPRQRTTDQAVAYLKVAEGCDYRCAFCIIPKLRGDQRSRPVESIVAEAHQLAEQGVQELILISQITTNYGLDLYGKPKFAELLQALGEVDIPWVRVHYAYPTGLTPEVLAAYREVPNVLRYLDLPLQHSHPDVLRAMNRPWQTDVNERLLDRIREQLPDAVLRTTLIVGFPGETEDHFNHLAAFIERQRFDHVGVFTFSPEDGTAAADLPNRVDPSIAAARKDRLMALQQPISAERNQRWVGRTIDVLIEQHNPETGAMIGRCDRFAPEVDGEVLVLPSEKGLQASPGTMVPVFITGSDVYDLTGQLVDTNAMAVTAQTSQ.

The MTTase N-terminal domain occupies 22 to 133 (PSVAFAHLGC…IVDVLKRVEA (112 aa)). The [4Fe-4S] cluster site is built by cysteine 31, cysteine 67, cysteine 96, cysteine 171, cysteine 175, and cysteine 178. The region spanning 157 to 386 (TTDQAVAYLK…MALQQPISAE (230 aa)) is the Radical SAM core domain. The 72-residue stretch at 389–460 (QRWVGRTIDV…VYDLTGQLVD (72 aa)) folds into the TRAM domain.

It belongs to the methylthiotransferase family. RimO subfamily. The cofactor is [4Fe-4S] cluster.

It localises to the cytoplasm. It catalyses the reaction L-aspartate(89)-[ribosomal protein uS12]-hydrogen + (sulfur carrier)-SH + AH2 + 2 S-adenosyl-L-methionine = 3-methylsulfanyl-L-aspartate(89)-[ribosomal protein uS12]-hydrogen + (sulfur carrier)-H + 5'-deoxyadenosine + L-methionine + A + S-adenosyl-L-homocysteine + 2 H(+). Its function is as follows. Catalyzes the methylthiolation of an aspartic acid residue of ribosomal protein uS12. This Prochlorococcus marinus (strain MIT 9303) protein is Ribosomal protein uS12 methylthiotransferase RimO.